The sequence spans 97 residues: Non-pathogenic pore-forming peptide amoebapore A (97 aa).

A signal peptide spans M1–Q20. Residues G21–C97 form the Saposin B-type domain. Disulfide bonds link C25-C97, C28-C91, and C55-C66.

In terms of assembly, monomer. Homodimer. Hexamer; formed during insertion in the membrane.

The protein localises to the cytoplasmic granule. Functionally, forms pores in the cell membrane of host cells. Implicated in the cytolytic activity of the parasite. Pore forming activity is lower compared to the activity of ameobapore A from the pathogenic strain HM-1:IMSS. The chain is Non-pathogenic pore-forming peptide amoebapore A from Entamoeba histolytica.